The chain runs to 204 residues: Large ribosomal subunit protein eL15z (204 aa).

The tract at residues 161-204 (LRGLTSEGKKNRGLRGKGHNNHKNRPSRRATWKKNNSLSLRRYR) is disordered. Positions 171-192 (NRGLRGKGHNNHKNRPSRRATW) are enriched in basic residues. Polar residues predominate over residues 193 to 204 (KKNNSLSLRRYR).

This sequence belongs to the eukaryotic ribosomal protein eL15 family.

The polypeptide is Large ribosomal subunit protein eL15z (RPL15A) (Arabidopsis thaliana (Mouse-ear cress)).